Consider the following 76-residue polypeptide: Exodeoxyribonuclease 7 small subunit (76 aa).

Belongs to the XseB family. Heterooligomer composed of large and small subunits.

It is found in the cytoplasm. The catalysed reaction is Exonucleolytic cleavage in either 5'- to 3'- or 3'- to 5'-direction to yield nucleoside 5'-phosphates.. Its function is as follows. Bidirectionally degrades single-stranded DNA into large acid-insoluble oligonucleotides, which are then degraded further into small acid-soluble oligonucleotides. This is Exodeoxyribonuclease 7 small subunit from Staphylococcus aureus (strain Mu3 / ATCC 700698).